The primary structure comprises 39 residues: Alpha-conotoxin ArIA (39 aa).

The propeptide occupies 1–17 (SDGRNVAAKAFHRIGRT). Disulfide bonds link Cys22-Cys28 and Cys23-Cys36. The ser-Xaa-Pro motif, crucial for potent interaction with nAChR stretch occupies residues 24–26 (SNP). Residue Pro33 is modified to 4-hydroxyproline; in ArIA.

The protein belongs to the conotoxin A superfamily. As to expression, expressed by the venom duct.

The protein resides in the secreted. In terms of biological role, alpha-conotoxins act on postsynaptic membranes, they bind to the nicotinic acetylcholine receptors (nAChR) and thus inhibit them. This toxin acts as a competitive inhibitor and is 3-fold more potent on alpha-7/CHRNA7 nAChRs (IC(50)=6 nM) than on alpha-3-beta-2/CHRNA3-CHRNB2 nAChR (IC(50)=18 nM). Functionally, acts as a competitive inhibitor and is 33-fold more potent on alpha-7/CHRNA7 nAChRs (IC(50)=1.8 nM) than on alpha-3-beta-2/CHRNA3-CHRNB2 nAChR (IC(50)=60.1 nM). The sequence is that of Alpha-conotoxin ArIA from Conus arenatus (Sand-dusted cone).